The primary structure comprises 258 residues: Acyl-[acyl-carrier-protein]--UDP-N-acetylglucosamine O-acyltransferase (258 aa).

Belongs to the transferase hexapeptide repeat family. LpxA subfamily. Homotrimer.

The protein resides in the cytoplasm. The catalysed reaction is a (3R)-hydroxyacyl-[ACP] + UDP-N-acetyl-alpha-D-glucosamine = a UDP-3-O-[(3R)-3-hydroxyacyl]-N-acetyl-alpha-D-glucosamine + holo-[ACP]. It participates in glycolipid biosynthesis; lipid IV(A) biosynthesis; lipid IV(A) from (3R)-3-hydroxytetradecanoyl-[acyl-carrier-protein] and UDP-N-acetyl-alpha-D-glucosamine: step 1/6. In terms of biological role, involved in the biosynthesis of lipid A, a phosphorylated glycolipid that anchors the lipopolysaccharide to the outer membrane of the cell. This chain is Acyl-[acyl-carrier-protein]--UDP-N-acetylglucosamine O-acyltransferase, found in Thermodesulfovibrio yellowstonii (strain ATCC 51303 / DSM 11347 / YP87).